Consider the following 282-residue polypeptide: HMG box-containing protein R545 (282 aa).

Residues 1–282 (MPKKTATKAN…KKEASDEESD (282 aa)) are disordered. Residues 16 to 29 (DSENDSVVSEEEDN) are compositionally biased toward acidic residues. Residues 70 to 87 (KGKVNAKKAPAKKAPVKK) show a composition bias toward basic residues. Residues 93-121 (DSDNEEDEASEDGSDDEEDVVSADDSDSD) show a composition bias toward acidic residues. Residues 127 to 153 (KAAKKAPAKKAPAKKAPAKKAPAKKGK) are compositionally biased toward basic residues. Basic and acidic residues-rich tracts occupy residues 176 to 187 (TKKDGDKPKKPL) and 197 to 214 (RMPELREEEPGKPYKEYM). The segment at residues 183-252 (PKKPLSDYQK…KAPAKGGSKS (70 aa)) is a DNA-binding region (HMG box). Residues 253 to 273 (TAKKAPAKKAPAKKAPAKKSK) show a composition bias toward basic residues.

In Acanthamoeba polyphaga mimivirus (APMV), this protein is HMG box-containing protein R545.